The primary structure comprises 203 residues: Recombination protein RecR (203 aa).

The segment at 56–71 (CAVCGNVSDDERCRIC) adopts a C4-type zinc-finger fold. Residues 79-179 (ALVCVVEEPK…TVTRIASGLP (101 aa)) enclose the Toprim domain.

The protein belongs to the RecR family.

In terms of biological role, may play a role in DNA repair. It seems to be involved in an RecBC-independent recombinational process of DNA repair. It may act with RecF and RecO. The polypeptide is Recombination protein RecR (Mycobacterium ulcerans (strain Agy99)).